The chain runs to 71 residues: Cruzioseptin-2 (71 aa).

Positions 1–22 are cleaved as a signal peptide; the sequence is MAFLKKSLFLVLFLGLVSLSIC. The propeptide occupies 23-43; that stretch reads EEEKREEENEEVQEDDDQSEE. Gln68 carries the glutamine amide modification. A propeptide spanning residues 70–71 is cleaved from the precursor; that stretch reads EQ.

In terms of tissue distribution, expressed by the skin glands.

It localises to the secreted. Has antimicrobial activity against Gram-negative bacterium E.coli (MIC=26.35 uM), against Gram-positive bacterium S.aureus (MIC=6.59 uM) and against fungus C.albicans (MIC=13.18 uM). At higher concentrations also has a bactericidal and fungicidal effect. Has hemagglutinating activity against horse erythrocytes. The sequence is that of Cruzioseptin-2 from Cruziohyla calcarifer (Splendid leaf frog).